The chain runs to 88 residues: Large ribosomal subunit protein eL34 (88 aa).

Belongs to the eukaryotic ribosomal protein eL34 family.

This is Large ribosomal subunit protein eL34 from Saccharolobus solfataricus (strain ATCC 35092 / DSM 1617 / JCM 11322 / P2) (Sulfolobus solfataricus).